The primary structure comprises 284 residues: Esterase alnB (284 aa).

Catalysis depends on charge relay system residues serine 93, aspartate 226, and histidine 255.

The protein belongs to the LovG family.

The protein operates within polyketide biosynthesis. Its function is as follows. Esterase; part of the gene cluster that mediates the biosynthesis of asperlin, a polyketide showing anti-inflammatory, antitumor and antibiotic activities. The first step of the asperlin biosynthesis is the production of the intermediate 2,4,6-octatrienoic acid by the highly redusing polyketide synthase alnA with cleavage of the PKS product by the esterase alnB. 2,4,6-octatrienoic acid is further converted to asperlin via several steps involving the remaining enzymes from the cluster. The chain is Esterase alnB from Emericella nidulans (strain FGSC A4 / ATCC 38163 / CBS 112.46 / NRRL 194 / M139) (Aspergillus nidulans).